Consider the following 540-residue polypeptide: Sterol O-acyltransferase 1 (540 aa).

The disordered stretch occupies residues M1 to Q20. The Cytoplasmic portion of the chain corresponds to M1–I128. The residue at position 2 (S2) is a Phosphoserine. Residue H127 participates in cholesterol binding. The helical transmembrane segment at R129–D150 threads the bilayer. Residues Y151 to K170 are Lumenal-facing. The helical transmembrane segment at F171 to W196 threads the bilayer. Topologically, residues A197–I208 are cytoplasmic. Residues Y209–L234 form a helical membrane-spanning segment. Topologically, residues A235–S242 are lumenal. Residues R243–P266 form a helical membrane-spanning segment. Topologically, residues R267–R309 are cytoplasmic. Residues W310–I342 form a helical membrane-spanning segment. The Lumenal segment spans residues K343–S359. A helical membrane pass occupies residues I360–M385. Residues L386–R433 lie on the Cytoplasmic side of the membrane. The FYXDWWN motif signature appears at F393–N399. N405, R408, N411, H415, Y423, K435, and S446 together coordinate an acyl-CoA. A helical membrane pass occupies residues F434–L458. H450 is an active-site residue. At S459–V464 the chain is on the lumenal side. Residues L465 to V480 traverse the membrane as a helical segment. At N481–R486 the chain is on the cytoplasmic side. Residues P487–C518 form a helical membrane-spanning segment. Residues C518 and C536 are joined by a disulfide bond. The Lumenal segment spans residues P519–F540.

It belongs to the membrane-bound acyltransferase family. Sterol o-acyltransferase subfamily. May form homo- or heterodimers. Interacts with UBIAD1.

The protein localises to the endoplasmic reticulum membrane. It carries out the reaction a sterol + a long-chain fatty acyl-CoA = a long-chain 3-hydroxysterol ester + CoA. The enzyme catalyses cholesterol + an acyl-CoA = a cholesterol ester + CoA. The catalysed reaction is cholesterol + (9Z)-octadecenoyl-CoA = cholesteryl (9Z-octadecenoate) + CoA. It catalyses the reaction cholesterol + hexadecanoyl-CoA = cholesteryl hexadecanoate + CoA. It carries out the reaction octadecanoyl-CoA + cholesterol = cholesteryl octadecanoate + CoA. The enzyme catalyses (9Z,12Z)-octadecadienoyl-CoA + cholesterol = cholesteryl (9Z,12Z)-octadecadienoate + CoA. The catalysed reaction is (5Z,8Z,11Z,14Z)-eicosatetraenoyl-CoA + cholesterol = cholesteryl (5Z,8Z,11Z,14Z)-eicosatetraenoate + CoA. It catalyses the reaction (9Z)-hexadecenoyl-CoA + cholesterol = cholesteryl (9Z)-hexadecenoate + CoA. It carries out the reaction (11Z)-octadecenoyl-CoA + cholesterol = cholesteryl (11Z)-octadecenoate + CoA. The enzyme catalyses (7Z)-octadecenoyl-CoA + cholesterol = cholesteryl (7Z)-octadecenoate + CoA. Functionally, catalyzes the formation of fatty acid-cholesterol esters, which are less soluble in membranes than cholesterol. Plays a role in lipoprotein assembly and dietary cholesterol absorption. Preferentially utilizes oleoyl-CoA ((9Z)-octadecenoyl-CoA) as a substrate: shows a higher activity towards an acyl-CoA substrate with a double bond at the delta-9 position (9Z) than towards saturated acyl-CoA or an unsaturated acyl-CoA with a double bond at the delta-7 (7Z) or delta-11 (11Z) positions. The sequence is that of Sterol O-acyltransferase 1 from Mus musculus (Mouse).